The sequence spans 154 residues: NADPH-dependent 7-cyano-7-deazaguanine reductase (154 aa).

Cys54 (thioimide intermediate) is an active-site residue. Catalysis depends on Asp61, which acts as the Proton donor. Substrate-binding positions include 76-78 and 95-96; these read VES and HE.

The protein belongs to the GTP cyclohydrolase I family. QueF type 1 subfamily.

The protein resides in the cytoplasm. The catalysed reaction is 7-aminomethyl-7-carbaguanine + 2 NADP(+) = 7-cyano-7-deazaguanine + 2 NADPH + 3 H(+). It functions in the pathway tRNA modification; tRNA-queuosine biosynthesis. Catalyzes the NADPH-dependent reduction of 7-cyano-7-deazaguanine (preQ0) to 7-aminomethyl-7-deazaguanine (preQ1). The chain is NADPH-dependent 7-cyano-7-deazaguanine reductase from Porphyromonas gingivalis (strain ATCC 33277 / DSM 20709 / CIP 103683 / JCM 12257 / NCTC 11834 / 2561).